The following is an 85-amino-acid chain: Cell division topological specificity factor (85 aa).

The protein belongs to the MinE family.

Functionally, prevents the cell division inhibition by proteins MinC and MinD at internal division sites while permitting inhibition at polar sites. This ensures cell division at the proper site by restricting the formation of a division septum at the midpoint of the long axis of the cell. This chain is Cell division topological specificity factor, found in Thioalkalivibrio sulfidiphilus (strain HL-EbGR7).